A 430-amino-acid polypeptide reads, in one-letter code: Glutamate-1-semialdehyde 2,1-aminomutase (430 aa).

At lysine 265 the chain carries N6-(pyridoxal phosphate)lysine.

It belongs to the class-III pyridoxal-phosphate-dependent aminotransferase family. HemL subfamily. As to quaternary structure, homodimer. Requires pyridoxal 5'-phosphate as cofactor.

Its subcellular location is the cytoplasm. It catalyses the reaction (S)-4-amino-5-oxopentanoate = 5-aminolevulinate. It participates in porphyrin-containing compound metabolism; protoporphyrin-IX biosynthesis; 5-aminolevulinate from L-glutamyl-tRNA(Glu): step 2/2. This chain is Glutamate-1-semialdehyde 2,1-aminomutase, found in Helicobacter pylori (strain HPAG1).